The primary structure comprises 309 residues: 2-phospho-L-lactate transferase (309 aa).

Residues aspartate 50 and lysine 89 each coordinate 7,8-didemethyl-8-hydroxy-5-deazariboflavin.

It belongs to the CofD family. As to quaternary structure, homodimer. It depends on Mg(2+) as a cofactor.

The enzyme catalyses (2S)-lactyl-2-diphospho-5'-guanosine + 7,8-didemethyl-8-hydroxy-5-deazariboflavin = oxidized coenzyme F420-0 + GMP + H(+). The protein operates within cofactor biosynthesis; coenzyme F420 biosynthesis. Functionally, catalyzes the transfer of the 2-phospholactate moiety from (2S)-lactyl-2-diphospho-5'-guanosine to 7,8-didemethyl-8-hydroxy-5-deazariboflavin (FO) with the formation of oxidized coenzyme F420-0 and GMP. The polypeptide is 2-phospho-L-lactate transferase (Methanococcus maripaludis (strain C5 / ATCC BAA-1333)).